The following is a 1148-amino-acid chain: MGELSPVCLCLLLQGLLLCNTGAARNLNELKMECPHTIRLGQGLVVGSVELPSLPIQQVETLKLESSCNFDLHTSTAGQQSFTKWTWEIKGDLAENTQASSTSFQTKSSEVNLRGLCLIPTLVVETAARMRKTIACYDLSCNQTVCQPTVYLMGPIQTCITTKSCLLSLGDQRIQVNYEKTYCVSGQLVEGICFNPIHTMALSQPSHTYDIMTMMVRCFLVIKKVTSGDSMKIEKNFETLVQKNGCTANNFQGYYICLIGSSSEPLYVPALDDYRSAEVLSRMAFAPHGEDHDIEKNAVSAMRIAGKVTGKAPSTESSDTVQGIAFSGSPLYTSTGVLTSKDDPVYIWAPGIIMEGNHSICEKKTLPLTWTGFISLPGEIEKTTQCTVFCTLAGPGADCEAYSETGIFNISSPTCLINRVQRFRGSEQQIKFVCQRVDMDITVYCNGMKKVILTKTLVIGQCIYTFTSIFSLIPGVAHSLAVELCVPGLHGWATMLLLLTFCFGWVLIPTITMILLKILIAFAYLCSKYNTDSKFRILIEKVKREYQKTMGSMVCEVCQYECETAKELESHRKSCSIGSCPYCLNPSEATTSALQAHFKVCKLTSRFQENLRKSLTVYEPMQGCYRTLSLFRYRSRFFVGLVWCVLLVLELIVWAASAETQNLNAGWTDTAHGSGIIPMKTDLELDFSLPSSASYTYRRQLQNPANEQEKIPFHLQLSKQVIHAEIQHLGHWMDATFNLKTAFHCYGSCEKYAYPWQTAGCFIEKDYEYETGWGCNPPDCPGVGTGCTACGVYLDKLKSVGKVFKIVSLRYTRKVCIQLGTEQTCKTVDSNDCLITTSVKVCLIGTISKFQPSDTLLFLGPLQQGGLIFKQWCTTTCQFGDPGDIMSTPTGMKCPELNGSFRKKCAFATTPVCQFDGNTISGYKRMIATKDSFQSFNVTEPHISTSALEWIDPDSSLRDHINVIVSRDLSFQDLSETPCQIDLATASIDGAWGSGVGFNLVCTVSLTECSAFLTSIKACDAAMCYGSTTANLVRGQNTIHIVGKGGHSGSKFMCCHDTKCSSTGLVAAAPHLDRVTGYNQADSDKIFDDGAPECGMSCWFKKSGEWILGVLNGNWMVVAVLVVLLILSILLFTLCCPRRPSYRKEHKP.

Residues 1 to 23 (MGELSPVCLCLLLQGLLLCNTGA) form the signal peptide. Residues 24–496 (ARNLNELKME…PGLHGWATML (473 aa)) are Lumenal-facing. Intrachain disulfides connect cysteine 34-cysteine 159, cysteine 68-cysteine 165, cysteine 117-cysteine 136, cysteine 141-cysteine 146, cysteine 183-cysteine 193, and cysteine 218-cysteine 257. Asparagine 142 is a glycosylation site (N-linked (GlcNAc...) asparagine; by host). Asparagine 357 is a glycosylation site (N-linked (GlcNAc...) asparagine; by host). 4 cysteine pairs are disulfide-bonded: cysteine 386–cysteine 445, cysteine 390–cysteine 399, cysteine 415–cysteine 434, and cysteine 462–cysteine 485. N-linked (GlcNAc...) asparagine; by host glycosylation is present at asparagine 409. The helical transmembrane segment at 497–517 (LLLTFCFGWVLIPTITMILLK) threads the bilayer. Residues 518–637 (ILIAFAYLCS…LSLFRYRSRF (120 aa)) are Cytoplasmic-facing. Residues 526-543 (CSKYNTDSKFRILIEKVK) form a binding to the ribonucleoprotein region. CCHC-type zinc fingers lie at residues 555-575 (CEVCQYECETAKELESHRKSC) and 580-601 (CPYCLNPSEATTSALQAHFKVC). Binding to the ribonucleoprotein regions lie at residues 598 to 615 (FKVCKLTSRFQENLRKSL), 602 to 613 (KLTSRFQENLRK), and 621 to 635 (MQGCYRTLSLFRYRS). Residues 621 to 644 (MQGCYRTLSLFRYRSRFFVGLVWC) enclose the ITAM domain. Residues 625-628 (YRTL) carry the YxxL motif. Residues 638-658 (FVGLVWCVLLVLELIVWAASA) form a helical membrane-spanning segment. The Lumenal segment spans residues 659–1115 (ETQNLNAGWT…WILGVLNGNW (457 aa)). 8 disulfide bridges follow: cysteine 745–cysteine 780, cysteine 749–cysteine 787, cysteine 761–cysteine 894, cysteine 775–cysteine 905, cysteine 790–cysteine 913, cysteine 816–cysteine 825, cysteine 833–cysteine 842, and cysteine 873–cysteine 877. The tract at residues 767 to 787 (YEYETGWGCNPPDCPGVGTGC) is fusion loop. The N-linked (GlcNAc...) asparagine; by host glycan is linked to asparagine 937. Disulfide bonds link cysteine 979/cysteine 1009, cysteine 1002/cysteine 1054, cysteine 1019/cysteine 1024, cysteine 1055/cysteine 1060, and cysteine 1094/cysteine 1098. A helical membrane pass occupies residues 1116 to 1136 (MVVAVLVVLLILSILLFTLCC). 2 binding to the ribonucleoprotein regions span residues 1131 to 1143 (LFTLCCPRRPSYR) and 1131 to 1148 (LFTLCCPRRPSYRKEHKP). Over 1137-1148 (PRRPSYRKEHKP) the chain is Cytoplasmic.

Belongs to the hantavirus envelope glycoprotein family. In terms of assembly, homodimer. Homotetramer; forms heterotetrameric Gn-Gc spikes in the pre-fusion conformation. Interacts (via C-terminus) with the nucleoprotein. Interacts with host TUFM; this interaction contributes to the virus-induced degradation of mitochondria by autophagy, which leads to degradation of host MAVS and inhibition of type I interferon (IFN) responses. Interacts with host MAP1LC3B; this interaction contributes to the virus-induced degradation of mitochondria by autophagy, which leads to degradation of host MAVS and inhibition of type I interferon (IFN) responses. As to quaternary structure, homodimer. Homotetramer; forms heterotetrameric Gn-Gc spikes in the pre-fusion conformation. Homotrimer; forms homotrimer in the post-fusion conformation at acidic pH. Interacts (via C-terminus) with the nucleoprotein. Post-translationally, envelope polyprotein precursor is quickly cleaved in vivo just after synthesis, presumably by host signal peptidase.

The protein resides in the virion membrane. The protein localises to the host cell surface. It localises to the host Golgi apparatus membrane. It is found in the host endoplasmic reticulum membrane. Its subcellular location is the host mitochondrion. Functionally, forms homotetramers with glycoprotein C at the surface of the virion. Attaches the virion to host cell receptors including integrin ITGAV/ITGB3. This attachment induces virion internalization predominantly through clathrin-dependent endocytosis. Mediates the assembly and budding of infectious virus particles through its interaction with the nucleocapsid protein and the viral genome. May dysregulate normal immune and endothelial cell responses through an ITAM motif. Translocates to mitochondria, binds to host TUFM and recruits MAP1LC3B. These interactions induce mitochondrial autophagy and therefore destruction of host MAVS leading to inhibition of type I interferon (IFN) responses. Concomitant breakdown of glycoprotein N is apparently prevented by the nucleoprotein that may inhibit Gn-stimulated autophagosome-lysosome fusion. Interacts with the viral genomic RNA. In terms of biological role, forms homotetramers with glycoprotein N at the surface of the virion. Attaches the virion to host cell receptors including integrin ITGAV/ITGB3. This attachment induces virion internalization predominantly through clathrin-dependent endocytosis. Class II fusion protein that promotes fusion of viral membrane with host endosomal membrane after endocytosis of the virion. This Homo sapiens (Human) protein is Envelopment polyprotein (GP).